The chain runs to 179 residues: MIP18 family protein C144.16 (179 aa).

The interval 1–26 is disordered; that stretch reads MSANLQNENPEVKELNQLPSRVEEEE.

It belongs to the MIP18 family.

Functionally, may play a role in chromosome segregation through establishment of sister chromatid cohesion. This chain is MIP18 family protein C144.16, found in Schizosaccharomyces pombe (strain 972 / ATCC 24843) (Fission yeast).